The primary structure comprises 282 residues: Pantothenate synthetase (282 aa).

30-37 (MGGLHQGH) lines the ATP pocket. Histidine 37 functions as the Proton donor in the catalytic mechanism. (R)-pantoate is bound at residue glutamine 61. Glutamine 61 contacts beta-alanine. Residue 146–149 (GQKD) coordinates ATP. Glutamine 152 provides a ligand contact to (R)-pantoate. Residues isoleucine 175 and 183-186 (MSTR) contribute to the ATP site.

It belongs to the pantothenate synthetase family. As to quaternary structure, homodimer.

Its subcellular location is the cytoplasm. The catalysed reaction is (R)-pantoate + beta-alanine + ATP = (R)-pantothenate + AMP + diphosphate + H(+). It participates in cofactor biosynthesis; (R)-pantothenate biosynthesis; (R)-pantothenate from (R)-pantoate and beta-alanine: step 1/1. Functionally, catalyzes the condensation of pantoate with beta-alanine in an ATP-dependent reaction via a pantoyl-adenylate intermediate. This is Pantothenate synthetase from Vesicomyosocius okutanii subsp. Calyptogena okutanii (strain HA).